Consider the following 426-residue polypeptide: Pyrophosphate--fructose 6-phosphate 1-phosphotransferase 2 (426 aa).

G15 contributes to the diphosphate binding site. D114 is a binding site for Mg(2+). Substrate is bound by residues 140-142 (TID), 186-188 (MGR), E247, and 308-311 (YELR). D142 functions as the Proton acceptor in the catalytic mechanism.

It belongs to the phosphofructokinase type A (PFKA) family. PPi-dependent PFK group II subfamily. Clade 'Short' sub-subfamily. Homotetramer. Requires Mg(2+) as cofactor.

The protein resides in the cytoplasm. It carries out the reaction beta-D-fructose 6-phosphate + diphosphate = beta-D-fructose 1,6-bisphosphate + phosphate + H(+). The protein operates within carbohydrate degradation; glycolysis; D-glyceraldehyde 3-phosphate and glycerone phosphate from D-glucose: step 3/4. With respect to regulation, non-allosteric. In terms of biological role, catalyzes the phosphorylation of D-fructose 6-phosphate, the first committing step of glycolysis. Uses inorganic phosphate (PPi) as phosphoryl donor instead of ATP like common ATP-dependent phosphofructokinases (ATP-PFKs), which renders the reaction reversible, and can thus function both in glycolysis and gluconeogenesis. Consistently, PPi-PFK can replace the enzymes of both the forward (ATP-PFK) and reverse (fructose-bisphosphatase (FBPase)) reactions. This is Pyrophosphate--fructose 6-phosphate 1-phosphotransferase 2 (pfk2) from Trichomonas vaginalis (strain ATCC PRA-98 / G3).